The chain runs to 882 residues: Molybdenum cofactor sulfurase (882 aa).

N6-(pyridoxal phosphate)lysine is present on Lys-265. Residue Cys-425 is part of the active site. The segment at 496–546 (GQPLPLATPGEAGAPPEDSEAQNAVPAARARGSSSPQEDTSPHSGVWNNSP) is disordered. Residues 527 to 546 (GSSSPQEDTSPHSGVWNNSP) are compositionally biased toward polar residues. A phosphoserine mark is found at Ser-528 and Ser-530. The region spanning 707–868 (KQSSDFQRNA…LSVGSQVLPL (162 aa)) is the MOSC domain.

Belongs to the class-V pyridoxal-phosphate-dependent aminotransferase family. MOCOS subfamily. It depends on pyridoxal 5'-phosphate as a cofactor. Ubiquitously expressed.

It carries out the reaction Mo-molybdopterin + L-cysteine + AH2 = thio-Mo-molybdopterin + L-alanine + A + H2O. It participates in cofactor biosynthesis; molybdopterin biosynthesis. Its function is as follows. Sulfurates the molybdenum cofactor. Sulfation of molybdenum is essential for xanthine dehydrogenase (XDH) and aldehyde oxidase (ADO) enzymes in which molybdenum cofactor is liganded by 1 oxygen and 1 sulfur atom in active form. This Bos taurus (Bovine) protein is Molybdenum cofactor sulfurase.